A 443-amino-acid chain; its full sequence is Probable D-serine dehydratase (443 aa).

Position 118 is an N6-(pyridoxal phosphate)lysine (Lys-118).

It belongs to the serine/threonine dehydratase family. DsdA subfamily. Pyridoxal 5'-phosphate is required as a cofactor.

It carries out the reaction D-serine = pyruvate + NH4(+). The sequence is that of Probable D-serine dehydratase from Aeromonas salmonicida (strain A449).